The chain runs to 263 residues: uncharacterized protein (263 aa).

The protein belongs to the A.longa ORF167/ORF288 family.

Its subcellular location is the plastid. This is an uncharacterized protein from Euglena longa (Euglenophycean alga).